The chain runs to 180 residues: Nucleoside-triphosphatase THEP1 (180 aa).

ATP contacts are provided by residues 9-16 (GPAGVGKT) and 104-111 (LIVIDEIG).

Belongs to the THEP1 NTPase family.

It catalyses the reaction a ribonucleoside 5'-triphosphate + H2O = a ribonucleoside 5'-diphosphate + phosphate + H(+). Functionally, has nucleotide phosphatase activity towards ATP, GTP, CTP, TTP and UTP. May hydrolyze nucleoside diphosphates with lower efficiency. This chain is Nucleoside-triphosphatase THEP1, found in Thermococcus kodakarensis (strain ATCC BAA-918 / JCM 12380 / KOD1) (Pyrococcus kodakaraensis (strain KOD1)).